The following is a 260-amino-acid chain: Proliferating cell nuclear antigen (260 aa).

A DNA-binding region spans residues 61 to 80 (RCDRNLAMGVNLSSMSKILK). K164 participates in a covalent cross-link: Glycyl lysine isopeptide (Lys-Gly) (interchain with G-Cter in ubiquitin).

The protein belongs to the PCNA family. Homotrimer. Forms a complex with activator 1 heteropentamer in the presence of ATP. Component of the replisome complex. In terms of processing, monoubiquitinated by the ube2b-rad18 complex on Lys-164. Monoubiquitination at Lys-164 also takes place in undamaged proliferating cells, and is mediated by the dcx(dtl) complex, leading to enhance PCNA-dependent translesion DNA synthesis.

The protein resides in the nucleus. Functionally, this protein is an auxiliary protein of DNA polymerase delta and is involved in the control of eukaryotic DNA replication by increasing the polymerase's processibility during elongation of the leading strand. The protein is Proliferating cell nuclear antigen (pcna) of Haplochromis burtoni (Burton's mouthbrooder).